The following is a 288-amino-acid chain: ATP synthase gamma chain (288 aa).

Belongs to the ATPase gamma chain family. In terms of assembly, F-type ATPases have 2 components, CF(1) - the catalytic core - and CF(0) - the membrane proton channel. CF(1) has five subunits: alpha(3), beta(3), gamma(1), delta(1), epsilon(1). CF(0) has three main subunits: a, b and c.

The protein resides in the cell inner membrane. In terms of biological role, produces ATP from ADP in the presence of a proton gradient across the membrane. The gamma chain is believed to be important in regulating ATPase activity and the flow of protons through the CF(0) complex. This is ATP synthase gamma chain from Actinobacillus pleuropneumoniae serotype 5b (strain L20).